A 319-amino-acid chain; its full sequence is Ferrochelatase (319 aa).

His-193 and Glu-274 together coordinate Fe cation.

It belongs to the ferrochelatase family.

It localises to the cytoplasm. It catalyses the reaction heme b + 2 H(+) = protoporphyrin IX + Fe(2+). It functions in the pathway porphyrin-containing compound metabolism; protoheme biosynthesis; protoheme from protoporphyrin-IX: step 1/1. In terms of biological role, catalyzes the ferrous insertion into protoporphyrin IX. This is Ferrochelatase from Actinobacillus pleuropneumoniae serotype 5b (strain L20).